A 431-amino-acid polypeptide reads, in one-letter code: Glutamate-1-semialdehyde 2,1-aminomutase (431 aa).

K269 is modified (N6-(pyridoxal phosphate)lysine).

The protein belongs to the class-III pyridoxal-phosphate-dependent aminotransferase family. HemL subfamily. As to quaternary structure, homodimer. It depends on pyridoxal 5'-phosphate as a cofactor.

Its subcellular location is the cytoplasm. The catalysed reaction is (S)-4-amino-5-oxopentanoate = 5-aminolevulinate. Its pathway is porphyrin-containing compound metabolism; protoporphyrin-IX biosynthesis; 5-aminolevulinate from L-glutamyl-tRNA(Glu): step 2/2. The protein operates within porphyrin-containing compound metabolism; chlorophyll biosynthesis. This chain is Glutamate-1-semialdehyde 2,1-aminomutase, found in Chlorobium phaeobacteroides (strain BS1).